The following is a 474-amino-acid chain: Aspartyl/glutamyl-tRNA(Asn/Gln) amidotransferase subunit B (474 aa).

It belongs to the GatB/GatE family. GatB subfamily. In terms of assembly, heterotrimer of A, B and C subunits.

It catalyses the reaction L-glutamyl-tRNA(Gln) + L-glutamine + ATP + H2O = L-glutaminyl-tRNA(Gln) + L-glutamate + ADP + phosphate + H(+). It carries out the reaction L-aspartyl-tRNA(Asn) + L-glutamine + ATP + H2O = L-asparaginyl-tRNA(Asn) + L-glutamate + ADP + phosphate + 2 H(+). Functionally, allows the formation of correctly charged Asn-tRNA(Asn) or Gln-tRNA(Gln) through the transamidation of misacylated Asp-tRNA(Asn) or Glu-tRNA(Gln) in organisms which lack either or both of asparaginyl-tRNA or glutaminyl-tRNA synthetases. The reaction takes place in the presence of glutamine and ATP through an activated phospho-Asp-tRNA(Asn) or phospho-Glu-tRNA(Gln). The chain is Aspartyl/glutamyl-tRNA(Asn/Gln) amidotransferase subunit B from Lactiplantibacillus plantarum (strain ATCC BAA-793 / NCIMB 8826 / WCFS1) (Lactobacillus plantarum).